A 548-amino-acid polypeptide reads, in one-letter code: Tripartite motif-containing protein 55 (548 aa).

The segment at 10–66 (FSKEQQTMDNLEKQLICPICLEMFTKPVVILPCQHNLCRKCASDIFQASNPYLPTRG) adopts an RING-type zinc-finger fold. The segment at 103–145 (NIIDIYKQESTRPEKKSDQPMCEEHEEERINIYCLNCEVPTCS) adopts a B box-type zinc-finger fold. The Zn(2+) site is built by Cys124, His127, Cys147, and His153. Residues 168–248 (QKSELSDGIA…EKLEHVRALI (81 aa)) are a coiled coil. In terms of domain architecture, COS spans 269–327 (MDEPEMAVFLQNAKTLLKKISEASKAFQMEKIEHGYENMNHFTVNLNREEKIIREIDFY). The tract at residues 326–532 (FYREDEDEEE…PASGSGADSE (207 aa)) is disordered. 2 stretches are compositionally biased toward acidic residues: residues 328 to 339 (REDEDEEEEEGG) and 347 to 360 (GEVG…EEVE). Low complexity-rich tracts occupy residues 484–496 (VAAA…AAVS) and 512–531 (EAPP…GADS).

As to quaternary structure, homooligomer and heterooligomer. Interacts with titin/TTN. Interacts with myosins. Interacts with SQSTM1 and NBR1. Isoform 4 may not able to interact with isoform 1, isoform 2 and isoform 3. Probably interacts with TRIM63 and TRIM54. In terms of processing, targeted for degradation through the proteasomal and lysosomal pathways in the presence of SUMO3. As to expression, highly expressed in muscle. Low-level expression in liver.

It is found in the nucleus. Its subcellular location is the cytoplasm. The enzyme catalyses S-ubiquitinyl-[E2 ubiquitin-conjugating enzyme]-L-cysteine + [acceptor protein]-L-lysine = [E2 ubiquitin-conjugating enzyme]-L-cysteine + N(6)-ubiquitinyl-[acceptor protein]-L-lysine.. Functionally, E3 ubiquitin ligase that plays an important role in regulating cardiac development and contractility, muscle growth, metabolism, and fiber-type differentiation. Acts as a critical factor that regulates cardiomyocyte size during development in concert with TRIM63 by regulating E2F1-mediated gene expression. Plays a role in apoptosis induction in cardiomyocytes by promoting ubiquitination of the DUSP1 phosphatase. Promotes non-canonical NF-kappa-B signaling and B-cell-mediated immune responses by mediating NFKB2 'Lys-48'-linked ubiquitination and processing. In turn, NFKB2 is further processed by valosin-containing protein/VCP, an ATPase that mediates ubiquitin-dependent protein degradation by the proteasome. May play a role in preventing macrophages from producing inflammatory factors and migrating by downregulating the level of nuclear NF-kappa-B subunit RELA. Also modifies PPARG via polyubiquitination and accelerates PPARG proteasomal degradation to inhibit its activity. The sequence is that of Tripartite motif-containing protein 55 (TRIM55) from Homo sapiens (Human).